We begin with the raw amino-acid sequence, 564 residues long: Ribonuclease J (564 aa).

The Zn(2+) site is built by histidine 85, histidine 87, aspartate 89, histidine 90, histidine 153, and aspartate 175. Position 375-379 (375-379 (HVSGH)) interacts with substrate. Zn(2+) is bound at residue histidine 401.

The protein belongs to the metallo-beta-lactamase superfamily. RNA-metabolizing metallo-beta-lactamase-like family. Bacterial RNase J subfamily. Homodimer, may be a subunit of the RNA degradosome. Zn(2+) serves as cofactor.

It localises to the cytoplasm. Its function is as follows. An RNase that has 5'-3' exonuclease and possibly endonuclease activity. Plays a role in 16S and 23S rRNA processing. Might have a role in mRNA maturation and/or decay. The chain is Ribonuclease J from Sinorhizobium meliloti (strain Sm2011 / Rm2011 / 2011).